Consider the following 692-residue polypeptide: Elongation factor G (692 aa).

Positions 8-283 (NRIRNIGIAA…AVIDYLPAPT (276 aa)) constitute a tr-type G domain. GTP contacts are provided by residues 17–24 (AHIDAGKT), 81–85 (DTPGH), and 135–138 (NKMD).

Belongs to the TRAFAC class translation factor GTPase superfamily. Classic translation factor GTPase family. EF-G/EF-2 subfamily.

The protein resides in the cytoplasm. Catalyzes the GTP-dependent ribosomal translocation step during translation elongation. During this step, the ribosome changes from the pre-translocational (PRE) to the post-translocational (POST) state as the newly formed A-site-bound peptidyl-tRNA and P-site-bound deacylated tRNA move to the P and E sites, respectively. Catalyzes the coordinated movement of the two tRNA molecules, the mRNA and conformational changes in the ribosome. This chain is Elongation factor G, found in Helicobacter pylori (strain P12).